The primary structure comprises 405 residues: Adenylosuccinate synthetase (405 aa).

GTP contacts are provided by residues 12–18 (GDEGKGK) and 40–42 (GHT). The active-site Proton acceptor is the D13. Mg(2+) contacts are provided by D13 and G40. IMP is bound by residues 13–16 (DEGK), 38–41 (NAGH), T121, R135, Q213, T228, and R297. Residue H41 is the Proton donor of the active site. 293 to 299 (TTTGRAR) contributes to the substrate binding site. Residues R299, 325-327 (KMD), and 390-392 (SAG) each bind GTP.

It belongs to the adenylosuccinate synthetase family. In terms of assembly, homodimer. Requires Mg(2+) as cofactor.

It localises to the cytoplasm. The catalysed reaction is IMP + L-aspartate + GTP = N(6)-(1,2-dicarboxyethyl)-AMP + GDP + phosphate + 2 H(+). It participates in purine metabolism; AMP biosynthesis via de novo pathway; AMP from IMP: step 1/2. Its function is as follows. Plays an important role in the de novo pathway of purine nucleotide biosynthesis. Catalyzes the first committed step in the biosynthesis of AMP from IMP. The protein is Adenylosuccinate synthetase of Deinococcus deserti (strain DSM 17065 / CIP 109153 / LMG 22923 / VCD115).